Here is a 252-residue protein sequence, read N- to C-terminus: Probable endonuclease 4 (252 aa).

Histidine 56, histidine 96, glutamate 129, aspartate 162, histidine 165, histidine 191, aspartate 204, histidine 206, and glutamate 233 together coordinate Zn(2+).

The protein belongs to the AP endonuclease 2 family. Requires Zn(2+) as cofactor.

It carries out the reaction Endonucleolytic cleavage to 5'-phosphooligonucleotide end-products.. Functionally, endonuclease IV plays a role in DNA repair. It cleaves phosphodiester bonds at apurinic or apyrimidinic (AP) sites, generating a 3'-hydroxyl group and a 5'-terminal sugar phosphate. This Mycobacterium ulcerans (strain Agy99) protein is Probable endonuclease 4.